The sequence spans 834 residues: MKRGRLPSSSEDSDDNGSLSTTWSQHSRSQHGRSSTCSRPEDRKPSEVFRTDLITAMKLHDSYQLNPDDYYVLADPWRQEWEKGVQVPVSPGTIPQPVARVVSEEKSLMFIRPKKYIASSGSEPPALGYVDIRTLADSVCRYDLNDMDAAWLEVTNEEFKEMGMPELDEYTMERVLEEFEQRCYDNMNHAIETEEGLGIEYDEDVVCDVCQSPDGEDGNEMVFCDKCNICVHQACYGILKVPEGSWLCRTCALGVQPKCLLCPKKGGAMKPTRSGTKWVHVSCALWIPEVSIGSPEKMEPITKVSHIPSSRWALVCSLCNEKFGASIQCSVKNCRTAFHVTCAFDRGLEMKTILAENDEVKFKSYCPKHSSHRKPEEGLGEGAAQENGAPESSPQSPLEPYGSLEPNREEAHRVSVRKQKLQQLEDEFYTFVNLLDVARALRLPEEVVDFLYQYWKLKRKINFNKPLITPKKDEEDNLAKREQDVLFRRLQLFTHLRQDLERVRNLTYMVTRREKIKRSVCKVQEQIFTQYTKLLEQEKVSGVPSSCSSALENMLFFNSPSVGPNAPKIEDLKWHSAFFRKQMGTSLVHPLKKSHKRDAVQNSSGTEGKTSHKQPGLCGRREGLEVSESLLSLEKTFAEARLLSSAQQKNGVVTPDHGKRRDNRFHCDLVKGDLKDKSFKQSHKPLRSTDTSQRHLDNTRAATSPGVGQSAPGTRKEIVPKCNGSLVKVPITPASPVKSWGGFRIPKKGERQQQGEAHDGACHQHSDCSHLGVSRAPAKERAKSRLRADSENDGYAPDGEMSDSESEASEKKCIHASSTISRRTDIIRRSILAS.

The disordered stretch occupies residues methionine 1–serine 46. The segment covering serine 24–serine 35 has biased composition (low complexity). An interaction with KAT7/HBO1 and histones region spans residues aspartate 61 to tryptophan 81. Residues tryptophan 81–histidine 189 are interaction with histones. At serine 90 the chain carries Phosphoserine. Threonine 93 carries the post-translational modification Phosphothreonine. Lysine 115 is covalently cross-linked (Glycyl lysine isopeptide (Lys-Gly) (interchain with G-Cter in SUMO2)). Residues aspartate 204–glycine 254 form a PHD-type 1 zinc finger. The C2HC pre-PHD-type zinc-finger motif lies at glutamine 256 to valine 290. The PHD-type 2 zinc finger occupies leucine 314 to serine 370. Residues proline 367 to glutamate 409 form a disordered region. A Glycyl lysine isopeptide (Lys-Gly) (interchain with G-Cter in SUMO2) cross-link involves residue lysine 573. Disordered stretches follow at residues histidine 589–arginine 621 and aspartate 676–lysine 716. Serine 603 carries the phosphoserine modification. The residue at position 609 (lysine 609) is an N6-acetyllysine. Phosphoserine occurs at positions 704 and 735. The tract at residues lysine 738–threonine 819 is disordered. Composition is skewed to basic and acidic residues over residues lysine 747–cysteine 768 and proline 777–serine 790.

This sequence belongs to the JADE family. In terms of assembly, component of the HBO1 complex composed at least of ING4 or ING5, KAT7/HBO1, MEAF6, and one of JADE1, JADE2 and JADE3. Interacts with NPHP4. As to expression, highly expressed in kidney. Also present in liver (at protein level).

The protein resides in the nucleus. It is found in the chromosome. It localises to the cytoplasm. Its subcellular location is the cytoskeleton. The protein localises to the cilium basal body. Its function is as follows. Scaffold subunit of some HBO1 complexes, which have a histone H4 acetyltransferase activity. Plays a key role in HBO1 complex by directing KAT7/HBO1 specificity towards histone H4 acetylation (H4K5ac, H4K8ac and H4K12ac), regulating DNA replication initiation, regulating DNA replication initiation. May also promote acetylation of nucleosomal histone H4 by KAT5. Promotes apoptosis. May act as a renal tumor suppressor. Negatively regulates canonical Wnt signaling; at least in part, cooperates with NPHP4 in this function. The polypeptide is Protein Jade-1 (Jade1) (Mus musculus (Mouse)).